The sequence spans 697 residues: Elongation factor G (697 aa).

The region spanning 8-290 is the tr-type G domain; it reads ERYRNIGISA…AVLDFLPSPV (283 aa). GTP is bound by residues 17–24, 88–92, and 142–145; these read AHIDAGKT, DTPGH, and NKMD.

This sequence belongs to the TRAFAC class translation factor GTPase superfamily. Classic translation factor GTPase family. EF-G/EF-2 subfamily.

It localises to the cytoplasm. Catalyzes the GTP-dependent ribosomal translocation step during translation elongation. During this step, the ribosome changes from the pre-translocational (PRE) to the post-translocational (POST) state as the newly formed A-site-bound peptidyl-tRNA and P-site-bound deacylated tRNA move to the P and E sites, respectively. Catalyzes the coordinated movement of the two tRNA molecules, the mRNA and conformational changes in the ribosome. In Methylobacillus flagellatus (strain ATCC 51484 / DSM 6875 / VKM B-1610 / KT), this protein is Elongation factor G.